A 677-amino-acid chain; its full sequence is Methionine--tRNA ligase (677 aa).

Positions 15-25 (PYANGSIHLGH) match the 'HIGH' region motif. Positions 146, 149, 159, and 162 each coordinate Zn(2+). The 'KMSKS' region signature appears at 333–337 (KMSKS). Lysine 336 lines the ATP pocket. In terms of domain architecture, tRNA-binding spans 575 to 677 (DFAKIDLRVA…DGAKPGQQVK (103 aa)).

This sequence belongs to the class-I aminoacyl-tRNA synthetase family. MetG type 1 subfamily. As to quaternary structure, homodimer. It depends on Zn(2+) as a cofactor.

The protein resides in the cytoplasm. It carries out the reaction tRNA(Met) + L-methionine + ATP = L-methionyl-tRNA(Met) + AMP + diphosphate. Functionally, is required not only for elongation of protein synthesis but also for the initiation of all mRNA translation through initiator tRNA(fMet) aminoacylation. The polypeptide is Methionine--tRNA ligase (Salmonella agona (strain SL483)).